The chain runs to 333 residues: Phosphate acyltransferase (333 aa).

The protein belongs to the PlsX family. Homodimer. Probably interacts with PlsY.

The protein localises to the cytoplasm. It carries out the reaction a fatty acyl-[ACP] + phosphate = an acyl phosphate + holo-[ACP]. It participates in lipid metabolism; phospholipid metabolism. Its function is as follows. Catalyzes the reversible formation of acyl-phosphate (acyl-PO(4)) from acyl-[acyl-carrier-protein] (acyl-ACP). This enzyme utilizes acyl-ACP as fatty acyl donor, but not acyl-CoA. This is Phosphate acyltransferase from Aliarcobacter butzleri (strain RM4018) (Arcobacter butzleri).